The sequence spans 146 residues: 3-hydroxyacyl-[acyl-carrier-protein] dehydratase FabZ (146 aa).

Residue His48 is part of the active site.

It belongs to the thioester dehydratase family. FabZ subfamily.

It localises to the cytoplasm. The catalysed reaction is a (3R)-hydroxyacyl-[ACP] = a (2E)-enoyl-[ACP] + H2O. Functionally, involved in unsaturated fatty acids biosynthesis. Catalyzes the dehydration of short chain beta-hydroxyacyl-ACPs and long chain saturated and unsaturated beta-hydroxyacyl-ACPs. The polypeptide is 3-hydroxyacyl-[acyl-carrier-protein] dehydratase FabZ (Teredinibacter turnerae (strain ATCC 39867 / T7901)).